The primary structure comprises 244 residues: Phosphoadenosine 5'-phosphosulfate reductase (244 aa).

Cys239 (nucleophile; cysteine thiosulfonate intermediate) is an active-site residue.

This sequence belongs to the PAPS reductase family. CysH subfamily.

The protein resides in the cytoplasm. The enzyme catalyses [thioredoxin]-disulfide + sulfite + adenosine 3',5'-bisphosphate + 2 H(+) = [thioredoxin]-dithiol + 3'-phosphoadenylyl sulfate. It functions in the pathway sulfur metabolism; hydrogen sulfide biosynthesis; sulfite from sulfate: step 3/3. Catalyzes the formation of sulfite from phosphoadenosine 5'-phosphosulfate (PAPS) using thioredoxin as an electron donor. The protein is Phosphoadenosine 5'-phosphosulfate reductase of Salmonella schwarzengrund (strain CVM19633).